The sequence spans 140 residues: ATP synthase epsilon chain 1 (140 aa).

Belongs to the ATPase epsilon chain family. As to quaternary structure, F-type ATPases have 2 components, CF(1) - the catalytic core - and CF(0) - the membrane proton channel. CF(1) has five subunits: alpha(3), beta(3), gamma(1), delta(1), epsilon(1). CF(0) has three main subunits: a, b and c.

Its subcellular location is the cell inner membrane. In terms of biological role, produces ATP from ADP in the presence of a proton gradient across the membrane. In Photobacterium profundum (strain SS9), this protein is ATP synthase epsilon chain 1.